Here is a 910-residue protein sequence, read N- to C-terminus: Constitutive coactivator of peroxisome proliferator-activated receptor gamma (910 aa).

Disordered stretches follow at residues 333 to 416 (SDAE…VPMC), 443 to 483 (SEPR…ESRQ), and 863 to 910 (SHHA…WRRY). 3 stretches are compositionally biased toward basic and acidic residues: residues 335–351 (AESR…ESRQ), 360–375 (ESRR…EPRQ), and 396–411 (ESRR…EPRQ). Positions 872–890 (QGSSYHRTGSGYSRSSQGQ) are enriched in polar residues. R885 is modified (omega-N-methylarginine). The span at 901-910 (QYEHDQWRRY) shows a compositional bias: basic and acidic residues.

Belongs to the constitutive coactivator of PPAR-gamma family. In terms of assembly, interacts with ESR1 and RXRA. Interacts with PPARG; in a ligand-independent manner. Widely expressed.

It localises to the nucleus. Functionally, functions as a transactivator of PPARG and ESR1. Functions in adipogenesis through PPARG activation. The protein is Constitutive coactivator of peroxisome proliferator-activated receptor gamma (FAM120B) of Homo sapiens (Human).